The primary structure comprises 194 residues: CASP-like protein 1D1 (194 aa).

Over residues 1–16 (MGSDETKSTLDTERST) the composition is skewed to basic and acidic residues. Positions 1–23 (MGSDETKSTLDTERSTVPRTGTT) are disordered. At 1 to 31 (MGSDETKSTLDTERSTVPRTGTTTKSCSITQ) the chain is on the cytoplasmic side. The chain crosses the membrane as a helical span at residues 32 to 52 (VVLRFVLFAATLTSIVVMVTS). Topologically, residues 53 to 77 (KQTKNIFIPGTPIRIPAAKFTNSPA) are extracellular. The helical transmembrane segment at 78–98 (LIYFVVALSVACFYSIVSTFV) threads the bilayer. Residues 99–109 (TVSAFKKHSCS) lie on the Cytoplasmic side of the membrane. Residues 110-130 (AILLLNLAIMDAVMVGIVASA) form a helical membrane-spanning segment. Residues 131-163 (TGAGGGVAYLGLKGNKEVRWGKICNIYDKFCRH) are Extracellular-facing. A helical membrane pass occupies residues 164 to 184 (VGGAIAVSLFASVILLLLSII). Residues 185 to 194 (SVLSLYKKIR) lie on the Cytoplasmic side of the membrane.

It belongs to the Casparian strip membrane proteins (CASP) family. In terms of assembly, homodimer and heterodimers.

It localises to the cell membrane. The sequence is that of CASP-like protein 1D1 from Arabidopsis lyrata subsp. lyrata (Lyre-leaved rock-cress).